The following is a 187-amino-acid chain: Protein canopy-1 (187 aa).

Positions 1-24 (MSPWIKHICLVLVAAFMLVKTTES) are cleaved as a signal peptide. Residues 28–181 (EALYCSACMA…EVSDHCKSSV (154 aa)) form the Saposin B-type domain. 3 cysteine pairs are disulfide-bonded: Cys32–Cys177, Cys35–Cys170, and Cys90–Cys143. The short motif at 184–187 (HSEL) is the Prevents secretion from ER element.

This sequence belongs to the canopy family. As to quaternary structure, homodimer. Interacts with fgfr1.

Its subcellular location is the endoplasmic reticulum. Functionally, involved in the maintenance of the midbrain-hindbrain boundary (MHB) organizer. Contributes to a positive-feedback loop of FGF signaling in the MHB, enabling the MHB to exert its role as an organizer for the tectal and cerebellar development. The polypeptide is Protein canopy-1 (cnpy1) (Danio rerio (Zebrafish)).